The following is a 687-amino-acid chain: Leucine-rich repeat and fibronectin type III domain-containing protein 1-like protein (687 aa).

Positions 1 to 17 are cleaved as a signal peptide; sequence MEWLIFSLLLLAVSASG. Residues 18–51 form the LRRNT domain; sequence QLCPKRCMCQNLSPSLAILCAKTGLLFVPTVIDR. Over 18–527 the chain is Extracellular; that stretch reads QLCPKRCMCQ…LRSHFLGGTM (510 aa). LRR repeat units lie at residues 52–73, 76–97, 100–121, 124–145, 149–170, 173–194, and 197–218; these read RTVELRLTENFITAVKRRDFAN, SLLHLTLSRNTISQIMPYTFAD, RLRALHLDSNRLSVITDDHFRG, NLRHLILANNQLHNISPHAFDD, TLEDLDLSYNNLVDIPWDTIGR, NVNTLNMDHNLIEHVPLGIFSN, and KLARLDMTSNKLKKIPPDPLFL. N-linked (GlcNAc...) asparagine glycosylation is present at asparagine 73. The region spanning 241-287 is the LRRCT domain; it reads NPLHCNCELLWLRRLTREDDLETCASPPDLTAKYFWTIPEEEFICDP. Residues 287-376 enclose the Ig-like domain; it reads PPVITRKSPK…STGTVELVVS (90 aa). An intrachain disulfide couples cysteine 309 to cysteine 358. N-linked (GlcNAc...) asparagine glycans are attached at residues asparagine 331, asparagine 340, asparagine 346, asparagine 383, asparagine 410, and asparagine 450. The disordered stretch occupies residues 384 to 412; that stretch reads STNRIREPDPGPSDILTSAKSTSSVSNET. The segment covering 398–412 has biased composition (polar residues); it reads ILTSAKSTSSVSNET. The Fibronectin type-III domain occupies 415 to 510; it reads QERKVVLAEL…VGCVTFVTET (96 aa). The helical transmembrane segment at 528–548 threads the bilayer; sequence IIIIGGIIVASVLVFIIILMI. The Cytoplasmic segment spans residues 549-687; sequence RYKVYSQHGA…AQRDWSDFKI (139 aa). 2 disordered regions span residues 563–601 and 630–687; these read GTAMTNVRSQTNGGQAAGQVPRSSSKIVEGQEASGGSLG and EDIV…DFKI. Polar residues-rich tracts occupy residues 565–576 and 657–672; these read AMTNVRSQTNGG and EGTSSDTQEDTASPQV. Residues 673–687 are compositionally biased toward basic and acidic residues; that stretch reads SDEKKAQRDWSDFKI.

The protein belongs to the LRFN family.

The protein resides in the membrane. The protein localises to the synapse. In terms of biological role, may be involved in the regulation of excitatory synapses. The sequence is that of Leucine-rich repeat and fibronectin type III domain-containing protein 1-like protein (lrfn1l) from Danio rerio (Zebrafish).